Consider the following 92-residue polypeptide: Small ribosomal subunit protein uS19c (92 aa).

Belongs to the universal ribosomal protein uS19 family.

The protein localises to the plastid. Its subcellular location is the chloroplast. Protein S19 forms a complex with S13 that binds strongly to the 16S ribosomal RNA. This chain is Small ribosomal subunit protein uS19c, found in Fagopyrum esculentum subsp. ancestrale (Wild buckwheat).